We begin with the raw amino-acid sequence, 311 residues long: MRLVFAGTPAVALPSLRALLDSPRHQVVAVVTRPDRPAGRGRHQRSSPVRELADERGLEVLAPARASDPDFLARLGEIAPDCCPVVAYGALLPRPALDIPKHGWVNLHFSLLPAYRGAAPVQRAVLAGEDMTGASVFEIEPALDSGPVYGVLTERIRPTDTSGDLLDRLAVAGARLLEAVMDGIEDGTLQARPQPSDGVSLAPKLTVEDVRVDWSAPAAAVDRLVRAATPAPGAWTTFRDRRVKLGPVRPAPAGHPPLPSGRLAAPERGLVLVGTATTPVVLDEVRPEGKAPMPAADWIRGLRPGTDEAFA.

The segment at 33–52 (RPDRPAGRGRHQRSSPVREL) is disordered. 110-113 (SLLP) serves as a coordination point for (6S)-5,6,7,8-tetrahydrofolate.

It belongs to the Fmt family.

The enzyme catalyses L-methionyl-tRNA(fMet) + (6R)-10-formyltetrahydrofolate = N-formyl-L-methionyl-tRNA(fMet) + (6S)-5,6,7,8-tetrahydrofolate + H(+). In terms of biological role, attaches a formyl group to the free amino group of methionyl-tRNA(fMet). The formyl group appears to play a dual role in the initiator identity of N-formylmethionyl-tRNA by promoting its recognition by IF2 and preventing the misappropriation of this tRNA by the elongation apparatus. The polypeptide is Methionyl-tRNA formyltransferase (Parafrankia sp. (strain EAN1pec)).